The primary structure comprises 202 residues: Imidazoleglycerol-phosphate dehydratase (202 aa).

The protein belongs to the imidazoleglycerol-phosphate dehydratase family.

It localises to the cytoplasm. The catalysed reaction is D-erythro-1-(imidazol-4-yl)glycerol 3-phosphate = 3-(imidazol-4-yl)-2-oxopropyl phosphate + H2O. It participates in amino-acid biosynthesis; L-histidine biosynthesis; L-histidine from 5-phospho-alpha-D-ribose 1-diphosphate: step 6/9. The protein is Imidazoleglycerol-phosphate dehydratase of Corynebacterium efficiens (strain DSM 44549 / YS-314 / AJ 12310 / JCM 11189 / NBRC 100395).